The chain runs to 208 residues: Large ribosomal subunit protein uL3 (208 aa).

N5-methylglutamine is present on glutamine 150.

The protein belongs to the universal ribosomal protein uL3 family. As to quaternary structure, part of the 50S ribosomal subunit. Forms a cluster with proteins L14 and L19. Methylated by PrmB.

Functionally, one of the primary rRNA binding proteins, it binds directly near the 3'-end of the 23S rRNA, where it nucleates assembly of the 50S subunit. The protein is Large ribosomal subunit protein uL3 of Buchnera aphidicola subsp. Cinara cedri (strain Cc).